The primary structure comprises 404 residues: tRNA N6-adenosine threonylcarbamoyltransferase, mitochondrial (404 aa).

The transit peptide at 1 to 27 directs the protein to the mitochondrion; the sequence is MFQSCLPGALRSWSRGVFSTSTRPRLV. A divalent metal cation is bound by residues H135 and H139. Substrate is bound by residues 157–161, D190, G210, E214, 317–318, and T345; these read LVSGG and SN. D346 provides a ligand contact to a divalent metal cation.

It belongs to the KAE1 / TsaD family. As to quaternary structure, monomer. Requires a divalent metal cation as cofactor.

It is found in the mitochondrion. It carries out the reaction L-threonylcarbamoyladenylate + adenosine(37) in tRNA = N(6)-L-threonylcarbamoyladenosine(37) in tRNA + AMP + H(+). Functionally, required for the formation of a threonylcarbamoyl group on adenosine at position 37 (t(6)A37) in mitochondrial tRNAs that read codons beginning with adenine. Probably involved in the transfer of the threonylcarbamoyl moiety of threonylcarbamoyl-AMP (TC-AMP) to the N6 group of A37. Involved in mitochondrial genome maintenance. The polypeptide is tRNA N6-adenosine threonylcarbamoyltransferase, mitochondrial (Danio rerio (Zebrafish)).